The primary structure comprises 255 residues: DNA repair protein RecO (255 aa).

The protein belongs to the RecO family.

Involved in DNA repair and RecF pathway recombination. In Listeria welshimeri serovar 6b (strain ATCC 35897 / DSM 20650 / CCUG 15529 / CIP 8149 / NCTC 11857 / SLCC 5334 / V8), this protein is DNA repair protein RecO.